The chain runs to 510 residues: P-(S)-hydroxymandelonitrile lyase (510 aa).

The signal sequence occupies residues 1 to 34; the sequence is MAVFISSSGSPGRATATTTTTTTLLLAVLAAAAA. 116–118 serves as a coordination point for substrate; it reads NGG. Intrachain disulfides connect Cys121/Cys377, Cys277/Cys289, and Cys313/Cys344. An N-linked (GlcNAc...) asparagine glycan is attached at Asn172. Residue 212 to 213 coordinates substrate; it reads ES. Ser213 is a catalytic residue. Asn365 carries N-linked (GlcNAc...) asparagine glycosylation. Active-site residues include Asp414 and His469. 465 to 469 is a binding site for substrate; that stretch reads SGAGH.

Belongs to the peptidase S10 family. Heterotetramer of two A and two B chains. The A and B chains are linked by a disulfide bond. Post-translationally, the N-terminus of chain A is blocked. In terms of tissue distribution, primary leaves of seedlings.

It catalyses the reaction (S)-4-hydroxymandelonitrile = 4-hydroxybenzaldehyde + hydrogen cyanide. Functionally, involved in cyanogenesis, the release of HCN from injured tissues. Is involved in the catabolism of the cyanogenic glycoside dhurrin. This is P-(S)-hydroxymandelonitrile lyase from Sorghum bicolor (Sorghum).